A 233-amino-acid polypeptide reads, in one-letter code: 5'-methylthioadenosine/S-adenosylhomocysteine nucleosidase (233 aa).

The Proton acceptor role is filled by E12. Substrate-binding positions include G78, I156, and 177 to 178 (ME). D201 serves as the catalytic Proton donor.

It belongs to the PNP/UDP phosphorylase family. MtnN subfamily.

It carries out the reaction S-adenosyl-L-homocysteine + H2O = S-(5-deoxy-D-ribos-5-yl)-L-homocysteine + adenine. The catalysed reaction is S-methyl-5'-thioadenosine + H2O = 5-(methylsulfanyl)-D-ribose + adenine. The enzyme catalyses 5'-deoxyadenosine + H2O = 5-deoxy-D-ribose + adenine. It functions in the pathway amino-acid biosynthesis; L-methionine biosynthesis via salvage pathway; S-methyl-5-thio-alpha-D-ribose 1-phosphate from S-methyl-5'-thioadenosine (hydrolase route): step 1/2. In terms of biological role, catalyzes the irreversible cleavage of the glycosidic bond in both 5'-methylthioadenosine (MTA) and S-adenosylhomocysteine (SAH/AdoHcy) to adenine and the corresponding thioribose, 5'-methylthioribose and S-ribosylhomocysteine, respectively. Also cleaves 5'-deoxyadenosine, a toxic by-product of radical S-adenosylmethionine (SAM) enzymes, into 5-deoxyribose and adenine. The protein is 5'-methylthioadenosine/S-adenosylhomocysteine nucleosidase of Listeria monocytogenes serovar 1/2a (strain ATCC BAA-679 / EGD-e).